The primary structure comprises 390 residues: MLSKRLFPYSNLFPRSRKYKFIVYFIICLTIIISALGVYLYSIPIVSPNQPQCDMVWMSPSYARIRAFDETHTKYASKYNLYLYREQDVDKMPNENENEDGNEGFTSLDGIPALFIHGNAGSFEQVRSIAARCSEMYYNDGRFKEKYPHARNIDFFTADFNEELSAFKGLRDQVEYVTQAISFIVDLYPQNPNRNIILIGHSMGGLVARIAASRQQHESNVDIILTLATPHSDPFPWLPKTSDFPDEVGLISIYSSVDLMVPPSVVTPKSKSDHFFSVDAAKLLGVPIDHQGIVWCGQLREKLSEALIGISGLNTLQDRMKVFKKIFSGDRKELGPTPIFGLAKLKLKLLQSWVHLLSLTIFALKWTIIVLAIIQLRKVYTKFNNPPPTH.

A helical membrane pass occupies residues 21 to 41; the sequence is FIVYFIICLTIIISALGVYLY. Residue S202 is part of the active site. A helical membrane pass occupies residues 354–374; sequence VHLLSLTIFALKWTIIVLAII.

It belongs to the GPI inositol-deacylase family.

It localises to the endoplasmic reticulum membrane. Involved in inositol deacylation of GPI-anchored proteins which plays important roles in the quality control and ER-associated degradation of GPI-anchored proteins. The chain is GPI inositol-deacylase (BST1) from Candida albicans (strain SC5314 / ATCC MYA-2876) (Yeast).